We begin with the raw amino-acid sequence, 1333 residues long: DNA-directed RNA polymerase subunit beta' (1333 aa).

Zn(2+)-binding residues include Cys-60, Cys-62, Cys-75, and Cys-78. Residues Asp-535, Asp-537, and Asp-539 each coordinate Mg(2+). 4 residues coordinate Zn(2+): Cys-901, Cys-983, Cys-990, and Cys-993.

The protein belongs to the RNA polymerase beta' chain family. In terms of assembly, the RNAP catalytic core consists of 2 alpha, 1 beta, 1 beta' and 1 omega subunit. When a sigma factor is associated with the core the holoenzyme is formed, which can initiate transcription. Mg(2+) serves as cofactor. Zn(2+) is required as a cofactor.

It catalyses the reaction RNA(n) + a ribonucleoside 5'-triphosphate = RNA(n+1) + diphosphate. In terms of biological role, DNA-dependent RNA polymerase catalyzes the transcription of DNA into RNA using the four ribonucleoside triphosphates as substrates. This chain is DNA-directed RNA polymerase subunit beta', found in Corynebacterium glutamicum (strain R).